A 342-amino-acid polypeptide reads, in one-letter code: MSSDLKSRFLQVYDTLKSELINDPAFEFDDDSRQWVEKMLDYNVPGGKLNRGLSVIDSYQLLKGGELTDNEIFLAAALGWCIEWLQAYFLVLDDIMDESHTRRGQPCWFRLPKVGMIAANDGIILRNNVPRILKKHFRGKPYYVDLLDLFNEVEFQTASGQMIDLITTLVGEKDLSKYSLSIHRRIVQYKTAYYSFYLPVACALLMFGEDLEKHEEVKNVLVEMGTYFQVQDDYLDCFGAPEVIGKIGTDIEDFKCSWLVVKALELSNEEQKKILHENYGKKDPSSVAKVKELYHTLNLQGVFEDYENTSYKKLITSIEGHPSKAVQAVLKSFLGKIYKRQK.

Residues Lys-48, Arg-51, and Gln-86 each contribute to the isopentenyl diphosphate site. Residues Asp-93 and Asp-97 each coordinate Mg(2+). Dimethylallyl diphosphate is bound at residue Arg-102. Arg-103 is a binding site for isopentenyl diphosphate. 5 residues coordinate dimethylallyl diphosphate: Lys-190, Thr-191, Gln-229, Lys-246, and Lys-255.

It belongs to the FPP/GGPP synthase family. Mg(2+) is required as a cofactor.

It is found in the cytoplasm. The enzyme catalyses isopentenyl diphosphate + dimethylallyl diphosphate = (2E)-geranyl diphosphate + diphosphate. It carries out the reaction isopentenyl diphosphate + (2E)-geranyl diphosphate = (2E,6E)-farnesyl diphosphate + diphosphate. It participates in isoprenoid biosynthesis; farnesyl diphosphate biosynthesis; farnesyl diphosphate from geranyl diphosphate and isopentenyl diphosphate: step 1/1. The protein operates within isoprenoid biosynthesis; geranyl diphosphate biosynthesis; geranyl diphosphate from dimethylallyl diphosphate and isopentenyl diphosphate: step 1/1. Its function is as follows. Catalyzes the sequential condensation of isopentenyl pyrophosphate with the allylic pyrophosphates, dimethylallyl pyrophosphate, and then with the resultant geranylpyrophosphate to the ultimate product farnesyl pyrophosphate. The sequence is that of Farnesyl pyrophosphate synthase 1 (FPS1) from Parthenium argentatum (Guayule rubber plant).